The sequence spans 247 residues: MSHRDTLFSAPIARLGDWTFDERVAEVFPDMIQRSVPGYSNIISMIGMLAERFVQPGTQVYDLGCSLGAATLSVRRNIHHDNCKIIAIDNSPAMIERCRRHIDAYKAPTPVDVIEGDIRDIAIENASMVVLNFTLQFLEPSERQALLDKIYQGLNPGGALVLSEKFSFEDAKVGELLFNMHHDFKRANGYSELEISQKRSMLENVMLTDSVETHKARLHKAGFEHSELWFQCFNFGSLVTLKAEDAA.

Residues Y39, 64–66, 89–90, 117–118, N132, and R199 each bind S-adenosyl-L-methionine; these read GCS, DN, and DI.

This sequence belongs to the class I-like SAM-binding methyltransferase superfamily. Cx-SAM synthase family. Homodimer.

The enzyme catalyses prephenate + S-adenosyl-L-methionine = carboxy-S-adenosyl-L-methionine + 3-phenylpyruvate + H2O. Functionally, catalyzes the conversion of S-adenosyl-L-methionine (SAM) to carboxy-S-adenosyl-L-methionine (Cx-SAM). This Escherichia coli O127:H6 (strain E2348/69 / EPEC) protein is Carboxy-S-adenosyl-L-methionine synthase.